The sequence spans 784 residues: Probable leucine-rich repeat receptor-like protein kinase IMK3 (784 aa).

The signal sequence occupies residues 1 to 48; the sequence is MEFITQNQAITSLSMINTDIDQPKASLRSRFLLHLIICLLFFVPPCSS. Over 49 to 409 the chain is Extracellular; it reads QAWDGVVITQ…PSHRNLSTKD (361 aa). An N-linked (GlcNAc...) asparagine glycan is attached at N82. LRR repeat units lie at residues 126–148, 150–172, 174–197, 198–220, 222–242, 247–268, 271–294, 295–317, 319–342, and 343–365; these read ALRKLSLHDNNLGGSIPMSLGLI, NLRGVQLFNNRLTGSIPASLGVS, FLQTLDLSNNLLSEIIPPNLADSS, KLLRLNLSFNSLSGQIPVSLSRS, SLQFLALDHNNLSGPILDTWG, NLRVLSLDHNSLSGPFPFSLCN, QLQDFSFSHNRIRGTLPSELSKLT, KLRKMDISGNSVSGHIPETLGNI, SLIHLDLSQNKLTGEIPISISDLE, and SLNFFNVSYNNLSGPVPTLLSQK. N-linked (GlcNAc...) asparagine glycans are attached at residues N203, N232, and N268. N316 carries N-linked (GlcNAc...) asparagine glycosylation. N-linked (GlcNAc...) asparagine glycosylation is found at N348, N353, N367, and N404. Residues 410–430 form a helical membrane-spanning segment; sequence IILIASGALLIVMLILVCVLC. Topologically, residues 431 to 784 are cytoplasmic; sequence CLLRKKANET…VPEASASTSQ (354 aa). The interval 441–467 is disordered; it reads KAKGGEAGPGAVAAKTEKGGEAEAGGE. The Protein kinase domain maps to 488 to 773; it reads CATAEIMGKS…TTATTSEPLI (286 aa). ATP contacts are provided by residues 494 to 502 and K516; that span reads MGKSTYGTV. The interval 760 to 784 is disordered; the sequence is RPEETTATTSEPLIDVPEASASTSQ.

It belongs to the protein kinase superfamily. Ser/Thr protein kinase family. Interacts with AGL24. Autophosphorylated. As to expression, expressed in meristems, including roots, vegetative, inflorescence and floral meristems, and in embryos.

The protein localises to the cell membrane. The catalysed reaction is L-seryl-[protein] + ATP = O-phospho-L-seryl-[protein] + ADP + H(+). The enzyme catalyses L-threonyl-[protein] + ATP = O-phospho-L-threonyl-[protein] + ADP + H(+). Functionally, can phosphorylate AGL24. The protein is Probable leucine-rich repeat receptor-like protein kinase IMK3 (IMK3) of Arabidopsis thaliana (Mouse-ear cress).